Reading from the N-terminus, the 285-residue chain is Protease HtpX homolog (285 aa).

2 helical membrane-spanning segments follow: residues 7 to 27 (TAML…MIGG) and 30 to 50 (GMTI…WFSD). His-131 lines the Zn(2+) pocket. Glu-132 is a catalytic residue. His-135 is a Zn(2+) binding site. The next 2 helical transmembrane spans lie at 146–166 (ITAT…FFGG) and 177–197 (IAGI…QMAI). Glu-202 contacts Zn(2+).

This sequence belongs to the peptidase M48B family. The cofactor is Zn(2+).

The protein localises to the cell inner membrane. This Burkholderia multivorans (strain ATCC 17616 / 249) protein is Protease HtpX homolog.